The chain runs to 323 residues: MIEFGNFYQLIAKNHLSHWLETLPAQIAAWQREQQHGLFKQWSNAVEFLPEMTPWRLDLLHSVTAESETPLSEGQLKRIDTLLRNLMPWRKGPFSLYGVDIDTEWRSDWKWDRVLPHLSDLTGRTILDVGCGSGYHLWRMIGAGAHLAVGIDPTQLFLCQFEAVRKLLGNDQRAHLLPLGIEQLPALKAFDTVFSMGVLYHRRSPLEHLWQLKDQLVNEGELVLETLVVDGDENTVLVPGDRYAQMRNVYFIPSAPALKKWLEKCGFIDVRIADVCVTTTEEQRRTEWMVTESLADFLDPNDRSKTVEGYPAPQRAVLIARKP.

Carboxy-S-adenosyl-L-methionine is bound by residues lysine 91, tryptophan 105, lysine 110, glycine 130, aspartate 152 to threonine 154, isoleucine 181 to glutamate 182, methionine 196, tyrosine 200, and arginine 315.

This sequence belongs to the class I-like SAM-binding methyltransferase superfamily. CmoB family. As to quaternary structure, homotetramer.

The catalysed reaction is carboxy-S-adenosyl-L-methionine + 5-hydroxyuridine(34) in tRNA = 5-carboxymethoxyuridine(34) in tRNA + S-adenosyl-L-homocysteine + H(+). Functionally, catalyzes carboxymethyl transfer from carboxy-S-adenosyl-L-methionine (Cx-SAM) to 5-hydroxyuridine (ho5U) to form 5-carboxymethoxyuridine (cmo5U) at position 34 in tRNAs. The chain is tRNA U34 carboxymethyltransferase from Salmonella enteritidis PT4 (strain P125109).